The sequence spans 788 residues: ATP-dependent 6-phosphofructokinase, platelet type (788 aa).

An N-acetylmethionine modification is found at Met-1. An N-terminal catalytic PFK domain 1 region spans residues 1–399; that stretch reads MSDQDSSTSS…NLNTYKRLAI (399 aa). Ser-2, Ser-6, Ser-12, and Ser-21 each carry phosphoserine. ATP is bound by residues Gly-34, 97-98, and 127-130; these read RC and GDGS. Residue Asp-128 coordinates Mg(2+). A Phosphoserine modification is found at Ser-142. Residues 173–175, Arg-210, 217–219, Glu-273, Arg-301, and 307–310 each bind substrate; these read SID, MGR, and HVQR. The active-site Proton acceptor is the Asp-175. Ser-386 carries the phosphoserine modification. Lys-395 carries the post-translational modification N6-acetyllysine. An interdomain linker region spans residues 400–411; the sequence is KEPDDKIPKSNC. A C-terminal regulatory PFK domain 2 region spans residues 412 to 788; sequence NVAIINVGAP…VHNHGELSAI (377 aa). Residue Arg-481 participates in beta-D-fructose 2,6-bisphosphate binding. Position 486 is an N6-acetyllysine (Lys-486). Beta-D-fructose 2,6-bisphosphate-binding positions include 538–542, Arg-576, 583–585, and Glu-639; these read TVSNN and MGG. O-linked (GlcNAc) serine glycosylation occurs at Ser-540. The residue at position 651 (Tyr-651) is a Phosphotyrosine. Residues Arg-665 and 671–674 each bind beta-D-fructose 2,6-bisphosphate; that span reads HMQQ. Lys-688 is subject to N6-acetyllysine. Position 744 (Arg-744) interacts with beta-D-fructose 2,6-bisphosphate.

The protein belongs to the phosphofructokinase type A (PFKA) family. ATP-dependent PFK group I subfamily. Eukaryotic two domain clade 'E' sub-subfamily. As to quaternary structure, homo- and heterotetramers. Phosphofructokinase (PFK) enzyme functions as a tetramer composed of different combinations of 3 types of subunits, called PFKM (M), PFKL (L) and PFKP (P). The composition of the PFK tetramer differs according to the tissue type it is present in. The kinetic and regulatory properties of the tetrameric enzyme are dependent on the subunit composition, hence can vary across tissues. Interacts with ATG4B; promoting phosphorylation of ATG4B. It depends on Mg(2+) as a cofactor. GlcNAcylation decreases enzyme activity. Post-translationally, phosphorylation at Ser-386 promotes interaction with ATG4B. Expressed at high level in neuroendocrine tissues.

It is found in the cytoplasm. It catalyses the reaction beta-D-fructose 6-phosphate + ATP = beta-D-fructose 1,6-bisphosphate + ADP + H(+). The protein operates within carbohydrate degradation; glycolysis; D-glyceraldehyde 3-phosphate and glycerone phosphate from D-glucose: step 3/4. Its activity is regulated as follows. Allosterically activated by ADP, AMP, or fructose 2,6-bisphosphate, and allosterically inhibited by ATP or citrate. Functionally, catalyzes the phosphorylation of D-fructose 6-phosphate to fructose 1,6-bisphosphate by ATP, the first committing step of glycolysis. The sequence is that of ATP-dependent 6-phosphofructokinase, platelet type (Pfkp) from Rattus norvegicus (Rat).